The following is a 26-amino-acid chain: Stage V sporulation protein M (26 aa).

Residues 3 to 9 (FYTIKLP) are important for localization.

As to quaternary structure, interacts with SpoIVA. May interact with the ATP-dependent protease FtsH.

The protein localises to the forespore outer membrane. Its function is as follows. Coordinates cortex and coat assembly during sporulation. Associates with the spore coat protein SpoIVA and with the outer forespore membrane, thereby serving as a membrane anchor that tethers SpoIVA and the entire spore coat to the forespore surface. May also serve as a competitive inhibitor of FtsH activity during sporulation. This Bacillus subtilis (strain 168) protein is Stage V sporulation protein M.